The chain runs to 829 residues: Trimethylamine-N-oxide reductase (829 aa).

The segment at residues 1-31 (MNRRDFLKGIASSSFVVLGGSSVLTPLNALA) is a signal peptide (tat-type signal). Serine 180 lines the Mo-bis(molybdopterin guanine dinucleotide) pocket.

The protein belongs to the prokaryotic molybdopterin-containing oxidoreductase family. Mo-bis(molybdopterin guanine dinucleotide) is required as a cofactor. Predicted to be exported by the Tat system. The position of the signal peptide cleavage has been experimentally proven.

It is found in the periplasm. The catalysed reaction is trimethylamine + 2 Fe(III)-[cytochrome c] + H2O = trimethylamine N-oxide + 2 Fe(II)-[cytochrome c] + 3 H(+). Reduces trimethylamine-N-oxide (TMAO) into trimethylamine; an anaerobic reaction coupled to energy-yielding reactions. The polypeptide is Trimethylamine-N-oxide reductase (torA) (Shewanella massilia).